Consider the following 364-residue polypeptide: Paraneoplastic antigen Ma2 homolog (364 aa).

Alanine 2 carries the N-acetylalanine modification. Residues 335 to 353 (EEEEASFENESIEEPEEGD) are compositionally biased toward acidic residues. The segment at 335–364 (EEEEASFENESIEEPEEGDGYGGWNHEGDD) is disordered. Gly residues predominate over residues 354 to 364 (GYGGWNHEGDD).

This sequence belongs to the PNMA family.

It localises to the nucleus. It is found in the nucleolus. In Macaca fascicularis (Crab-eating macaque), this protein is Paraneoplastic antigen Ma2 homolog (PNMA2).